The following is a 422-amino-acid chain: MNVPPVLLLFLLSSVRATEQPQVVTEHPSMDAALTGANASHFWANYTFSDWQNFVGRRRYGAESQNPTVKALLIVAYSFIIVFSLFGNVLVCHVIFKNQRMHSATSLFIVNLAVADIMITLLNTPFTLVRFVNSTWVFGKGMCHVSRFAQYCSLHVSALTLTAIAVDRHQVIMHPLKPRISITKGVIYIAVIWVMATFFSLPHAICQKLFTFKYSEDIVRSLCLPDFPEPADLFWKYLDLATFILLYLLPLFIISVAYARVAKKLWLCNTIGDVTTEQYLALRRKKKTTVKMLVLVVVLFALCWFPLNCYVLLLSSKAIHTNNALYFAFHWFAMSSTCYNPFIYCWLNENFRVELKALLSMCQRPSKPQEDRLPSPVPSFRVAWTEKSHGRRALLANHHLPSSQIQSGKTDLSSVEPTVAVS.

Positions Met1 to Ala17 are cleaved as a signal peptide. Residues Thr18–Lys70 are Extracellular-facing. The helical transmembrane segment at Ala71–Val91 threads the bilayer. At Cys92 to Ser106 the chain is on the cytoplasmic side. A helical transmembrane segment spans residues Leu107–Thr127. The Extracellular segment spans residues Leu128–Cys143. Cys143 and Cys223 are disulfide-bonded. A helical membrane pass occupies residues His144–Val166. Residues Asp167–Lys184 lie on the Cytoplasmic side of the membrane. A helical transmembrane segment spans residues Gly185 to Ile205. Topologically, residues Cys206 to Lys236 are extracellular. The helical transmembrane segment at Tyr237–Ala257 threads the bilayer. At Tyr258–Met292 the chain is on the cytoplasmic side. The chain crosses the membrane as a helical span at residues Leu293–Leu313. Residues Leu314 to Tyr326 lie on the Extracellular side of the membrane. The helical transmembrane segment at Phe327–Leu347 threads the bilayer. The Cytoplasmic portion of the chain corresponds to Asn348–Ser422. A disordered region spans residues Pro401 to Ser422.

The protein belongs to the G-protein coupled receptor 1 family. As to expression, expressed preferentially in brain, and its neuronal expression is relegated to limbic brain regions, particularly in forebrain.

The protein localises to the cell membrane. In terms of biological role, G-protein coupled receptor for PEN, a neuropeptide produced from the precursor protein, proSAAS (encoded by PCSK1N). Acts through a G(i)- and G(q)-alpha-alpha-mediated pathway in response to PEN. Plays a role in food intake and body weight regulation. May contribute to the regulation of anxiety-related behaviors. The protein is G-protein coupled receptor 83 of Rattus norvegicus (Rat).